The following is a 622-amino-acid chain: Chaperone protein HscA homolog (622 aa).

The protein belongs to the heat shock protein 70 family.

In terms of biological role, chaperone involved in the maturation of iron-sulfur cluster-containing proteins. Has a low intrinsic ATPase activity which is markedly stimulated by HscB. The protein is Chaperone protein HscA homolog of Acidovorax sp. (strain JS42).